Consider the following 114-residue polypeptide: Large ribosomal subunit protein bL19 (114 aa).

It belongs to the bacterial ribosomal protein bL19 family.

This protein is located at the 30S-50S ribosomal subunit interface and may play a role in the structure and function of the aminoacyl-tRNA binding site. This is Large ribosomal subunit protein bL19 from Acetivibrio thermocellus (strain ATCC 27405 / DSM 1237 / JCM 9322 / NBRC 103400 / NCIMB 10682 / NRRL B-4536 / VPI 7372) (Clostridium thermocellum).